The chain runs to 325 residues: Probable 2-ketogluconate reductase (325 aa).

Residues 158-159 (RI), threonine 211, 238-240 (ISR), and aspartate 264 contribute to the NAD(+) site. Residue arginine 240 is part of the active site. Glutamate 269 is a catalytic residue. The active-site Proton donor is histidine 288. Position 288–291 (288–291 (HIGS)) interacts with NAD(+).

It belongs to the D-isomer specific 2-hydroxyacid dehydrogenase family.

It carries out the reaction D-gluconate + NADP(+) = 2-dehydro-D-gluconate + NADPH + H(+). In Bacillus subtilis (strain 168), this protein is Probable 2-ketogluconate reductase (yvcT).